The sequence spans 974 residues: Valine--tRNA ligase, chloroplastic/mitochondrial 2 (974 aa).

A 'HIGH' region motif is present at residues 109–119; that stretch reads PNVTGSLHMGH. Residues 432 to 454 form an LRR 1 repeat; that stretch reads LAEKALLAVENKELTIIPERFEK. Residues 489–518 adopt a coiled-coil conformation; that stretch reads EEDYIVAKSAEEALEKALEKYGKDVEIYQD. A 'KMSKS' region motif is present at residues 598 to 602; it reads KMSKS. Lys601 contributes to the ATP binding site. The stretch at 857-880 is one LRR 2 repeat; sequence LALLSRLDLNNVHFSNAPPGDANL.

Belongs to the class-I aminoacyl-tRNA synthetase family.

The protein localises to the plastid. It is found in the chloroplast. Its subcellular location is the mitochondrion. It catalyses the reaction tRNA(Val) + L-valine + ATP = L-valyl-tRNA(Val) + AMP + diphosphate. The polypeptide is Valine--tRNA ligase, chloroplastic/mitochondrial 2 (Arabidopsis thaliana (Mouse-ear cress)).